A 227-amino-acid polypeptide reads, in one-letter code: 2,3-bisphosphoglycerate-dependent phosphoglycerate mutase (227 aa).

Substrate-binding positions include 7–14, 20–21, R59, 86–89, K97, 113–114, and 182–183; these read RHGFSEWN, TG, ERHY, RR, and GN. The Tele-phosphohistidine intermediate role is filled by H8. E86 (proton donor/acceptor) is an active-site residue.

This sequence belongs to the phosphoglycerate mutase family. BPG-dependent PGAM subfamily. As to quaternary structure, homodimer.

The enzyme catalyses (2R)-2-phosphoglycerate = (2R)-3-phosphoglycerate. It functions in the pathway carbohydrate degradation; glycolysis; pyruvate from D-glyceraldehyde 3-phosphate: step 3/5. Catalyzes the interconversion of 2-phosphoglycerate and 3-phosphoglycerate. The protein is 2,3-bisphosphoglycerate-dependent phosphoglycerate mutase of Haemophilus ducreyi (strain 35000HP / ATCC 700724).